The following is a 121-amino-acid chain: NAD(P)H-quinone oxidoreductase subunit M (121 aa).

This sequence belongs to the complex I NdhM subunit family. As to quaternary structure, NDH-1 can be composed of about 15 different subunits; different subcomplexes with different compositions have been identified which probably have different functions.

Its subcellular location is the cellular thylakoid membrane. It catalyses the reaction a plastoquinone + NADH + (n+1) H(+)(in) = a plastoquinol + NAD(+) + n H(+)(out). The catalysed reaction is a plastoquinone + NADPH + (n+1) H(+)(in) = a plastoquinol + NADP(+) + n H(+)(out). Functionally, NDH-1 shuttles electrons from an unknown electron donor, via FMN and iron-sulfur (Fe-S) centers, to quinones in the respiratory and/or the photosynthetic chain. The immediate electron acceptor for the enzyme in this species is believed to be plastoquinone. Couples the redox reaction to proton translocation, and thus conserves the redox energy in a proton gradient. Cyanobacterial NDH-1 also plays a role in inorganic carbon-concentration. This chain is NAD(P)H-quinone oxidoreductase subunit M, found in Synechococcus sp. (strain JA-3-3Ab) (Cyanobacteria bacterium Yellowstone A-Prime).